Consider the following 530-residue polypeptide: GATA zinc finger domain-containing protein 4 (530 aa).

Disordered regions lie at residues 1–27 (MSINHFNNNKNNNNKNNKNNEENFWDN) and 212–386 (STVV…INNN). Composition is skewed to low complexity over residues 7–17 (NNNKNNNNKNN), 216–290 (SNSP…FNNN), and 299–386 (NSNN…INNN). Residues 494-518 (CSMCNIKESISWIKTMVNGQLCNAC) form a GATA-type zinc finger.

The protein is GATA zinc finger domain-containing protein 4 (gtaD) of Dictyostelium discoideum (Social amoeba).